Reading from the N-terminus, the 37-residue chain is Large ribosomal subunit protein bL36 (37 aa).

This sequence belongs to the bacterial ribosomal protein bL36 family.

The protein is Large ribosomal subunit protein bL36 of Natranaerobius thermophilus (strain ATCC BAA-1301 / DSM 18059 / JW/NM-WN-LF).